Consider the following 99-residue polypeptide: Probable small ribosomal subunit protein cS23 (99 aa).

The protein belongs to the chloroplast-specific ribosomal protein cS23 family. Part of the 30S ribosomal subunit.

Functionally, probably a ribosomal protein or a ribosome-associated protein. In Synechococcus sp. (strain JA-3-3Ab) (Cyanobacteria bacterium Yellowstone A-Prime), this protein is Probable small ribosomal subunit protein cS23.